The following is a 151-amino-acid chain: Caveolin-3 (151 aa).

Residues 1-83 (MMTEEHTDLE…RLLSTLLGVP (83 aa)) are Cytoplasmic-facing. Lysine 38 participates in a covalent cross-link: Glycyl lysine isopeptide (Lys-Gly) (interchain with G-Cter in SUMO3). The required for interaction with DAG1 stretch occupies residues 64–114 (TFTVSKYWCYRLLSTLLGVPLALLWGFLFACISFCHIWAVVPCIKSYLIEI). The segment at residues 84-104 (LALLWGFLFACISFCHIWAVV) is an intramembrane region (helical). Residues 105-151 (PCIKSYLIEIQCISHIYSLCIRTFCNPLFAALGQVCSNIKVVLRREG) lie on the Cytoplasmic side of the membrane.

Belongs to the caveolin family. Homooligomer. Interacts with DYSF. Interacts with DLG1 and KCNA5; forms a ternary complex. Interacts with DAG1 (via its C-terminal); the interaction prevents binding of DAG1 with DMD. Interacts with TRIM72. Interacts with MUSK; may regulate MUSK signaling. Interacts with POPDC1. Interacts with CAVIN1, CAVIN2 and CAVIN4. Post-translationally, sumoylation with SUMO3 by PIAS4 may reduce agonist-induced internalization and desensitization of adrenergic receptor ABRD2. Expressed predominantly in muscle.

The protein localises to the golgi apparatus membrane. Its subcellular location is the cell membrane. It localises to the membrane. The protein resides in the caveola. It is found in the sarcolemma. Its function is as follows. May act as a scaffolding protein within caveolar membranes. Interacts directly with G-protein alpha subunits and can functionally regulate their activity. May also regulate voltage-gated potassium channels. Plays a role in the sarcolemma repair mechanism of both skeletal muscle and cardiomyocytes that permits rapid resealing of membranes disrupted by mechanical stress. Mediates the recruitment of CAVIN2 and CAVIN3 proteins to the caveolae. The polypeptide is Caveolin-3 (Mus musculus (Mouse)).